Reading from the N-terminus, the 23-residue chain is Brevinin-1SE (23 aa).

The cysteines at positions 17 and 23 are disulfide-linked.

Expressed by the skin glands.

Its subcellular location is the secreted. Mast cell degranulating peptide. Causes histamine release from rat peritoneal mast cells in vitro. Has antibacterial activity against the Gram-negative bacterium E.coli K12 and Gram-positive bacterium M.luteus NCT C2665. This chain is Brevinin-1SE, found in Lithobates sevosus (Dusky gopher frog).